The chain runs to 576 residues: Lysine--tRNA ligase, mitochondrial (576 aa).

A mitochondrion-targeting transit peptide spans 1–30; that stretch reads MNVLLKRRSLTFAPRWLWCKCRSSRSRPYS.

The protein belongs to the class-II aminoacyl-tRNA synthetase family.

Its subcellular location is the mitochondrion matrix. It catalyses the reaction tRNA(Lys) + L-lysine + ATP = L-lysyl-tRNA(Lys) + AMP + diphosphate. Its function is as follows. Catalyzes the attachment of lysine to tRNA(Lys) in the mitochondrion. The polypeptide is Lysine--tRNA ligase, mitochondrial (MSK1) (Saccharomyces cerevisiae (strain ATCC 204508 / S288c) (Baker's yeast)).